Reading from the N-terminus, the 115-residue chain is Superoxide reductase (115 aa).

6 residues coordinate Fe cation: Glu-14, His-16, His-41, His-47, Cys-102, and His-105.

The protein belongs to the desulfoferrodoxin family. As to quaternary structure, homotetramer. Requires Fe cation as cofactor.

The enzyme catalyses reduced [rubredoxin] + superoxide + 2 H(+) = oxidized [rubredoxin] + H2O2. Functionally, uses electrons from reduced NADP, by way of rubredoxin and an oxidoreductase, to catalyze the reduction of superoxide to hydrogen peroxide. This Pyrococcus abyssi (strain GE5 / Orsay) protein is Superoxide reductase (sorA).